We begin with the raw amino-acid sequence, 404 residues long: MSQSGSRLFTSESVTEGHPDKICDAISDSILDALLTDDPRARVAVETLVTTGQVHVAGEVTTTAYADIPKIVRDTVLEIGYDSSAKGFDGNSCGVNVAIGAQSPEIAQGVDHSHEVRTGELSDDEIDRQGAGDQGLMFGFATTDTPELMPLPIALAHRLSRRLTEVRKSGVLPYLRPDGKTQVTIEYDGDKAVRLDTVVISTQHAADIDLDNLLTPDLREKVLGSVLAEIDMPELDVSDIRLLVNPTGKFVLGGPMGDAGLTGRKIIVDTYGGMARHGGGAFSGKDPSKVDRSAAYAMRWVAKNAVAAGLADRIEVQVAYAIGKAAPVGLFVETFGTEKTDPARIQQAITETFDLRPGAIIRDLDLLRPIYAQTAAYGHFGRTDIDLPWESIDRAEKLRAAAGL.

H18 contributes to the ATP binding site. D20 provides a ligand contact to Mg(2+). E46 serves as a coordination point for K(+). Residues E59 and Q102 each contribute to the L-methionine site. The interval 102–112 (QSPEIAQGVDH) is flexible loop. ATP contacts are provided by residues 178–180 (DGK), 249–250 (KF), D258, 264–265 (RK), A281, and K285. D258 serves as a coordination point for L-methionine. K289 contacts L-methionine.

It belongs to the AdoMet synthase family. As to quaternary structure, homotetramer; dimer of dimers. Mg(2+) serves as cofactor. Requires K(+) as cofactor.

The protein resides in the cytoplasm. The catalysed reaction is L-methionine + ATP + H2O = S-adenosyl-L-methionine + phosphate + diphosphate. Its pathway is amino-acid biosynthesis; S-adenosyl-L-methionine biosynthesis; S-adenosyl-L-methionine from L-methionine: step 1/1. In terms of biological role, catalyzes the formation of S-adenosylmethionine (AdoMet) from methionine and ATP. The overall synthetic reaction is composed of two sequential steps, AdoMet formation and the subsequent tripolyphosphate hydrolysis which occurs prior to release of AdoMet from the enzyme. In Rhodococcus opacus (strain B4), this protein is S-adenosylmethionine synthase.